The chain runs to 307 residues: Nucleotide-binding protein Acid345_3782 (307 aa).

Position 31-38 (31-38 (GLSGSGKA)) interacts with ATP. A GTP-binding site is contributed by 81-84 (DIRE).

It belongs to the RapZ-like family.

In terms of biological role, displays ATPase and GTPase activities. In Koribacter versatilis (strain Ellin345), this protein is Nucleotide-binding protein Acid345_3782.